The chain runs to 75 residues: MNSKYLFVFLILNVIFIDLCQGFLWSLIPSAISAVTSLIKKGRRRRELGSQYDYLQDFRKRELDLDDLLSKFPDY.

The signal sequence occupies residues M1–G22. K41 bears the Lysine amide mark. Residues E47–Y75 constitute a propeptide that is removed on maturation.

The protein belongs to the non-disulfide-bridged peptide (NDBP) superfamily. Short antimicrobial peptide (group 4) family. Expressed by the venom gland.

Its subcellular location is the secreted. In Chaerilus tricostatus (Scorpion), this protein is Peptide Ctri10036.